Consider the following 409-residue polypeptide: Elongation factor Tu, chloroplastic (409 aa).

Positions 10 to 214 (KPHVNIGTIG…AVDEYIPTPE (205 aa)) constitute a tr-type G domain. Positions 19-26 (GHVDHGKT) are G1. 19–26 (GHVDHGKT) is a GTP binding site. T26 lines the Mg(2+) pocket. The tract at residues 60–64 (GITIN) is G2. The segment at 81–84 (DCPG) is G3. GTP-binding positions include 81–85 (DCPGH) and 136–139 (NKED). The interval 136-139 (NKED) is G4. The interval 174 to 176 (SAL) is G5.

It belongs to the TRAFAC class translation factor GTPase superfamily. Classic translation factor GTPase family. EF-Tu/EF-1A subfamily.

It localises to the plastid. Its subcellular location is the chloroplast. The catalysed reaction is GTP + H2O = GDP + phosphate + H(+). In terms of biological role, GTP hydrolase that promotes the GTP-dependent binding of aminoacyl-tRNA to the A-site of ribosomes during protein biosynthesis. The chain is Elongation factor Tu, chloroplastic (tufA) from Phaeodactylum tricornutum (strain CCAP 1055/1).